A 354-amino-acid polypeptide reads, in one-letter code: GTPase Obg (354 aa).

The Obg domain occupies 1-159 (MQFIDHAEIE…KQLRLELKLL (159 aa)). The region spanning 160–328 (AEVGIIGLPN…LLQEIWDVLD (169 aa)) is the OBG-type G domain. GTP is bound by residues 166-173 (GLPNAGKS), 191-195 (FTTLI), 213-216 (DIPG), 280-283 (NKLD), and 309-311 (SAV). Residues Ser-173 and Thr-193 each coordinate Mg(2+).

It belongs to the TRAFAC class OBG-HflX-like GTPase superfamily. OBG GTPase family. In terms of assembly, monomer. It depends on Mg(2+) as a cofactor.

Its subcellular location is the cytoplasm. Functionally, an essential GTPase which binds GTP, GDP and possibly (p)ppGpp with moderate affinity, with high nucleotide exchange rates and a fairly low GTP hydrolysis rate. Plays a role in control of the cell cycle, stress response, ribosome biogenesis and in those bacteria that undergo differentiation, in morphogenesis control. The chain is GTPase Obg from Picosynechococcus sp. (strain ATCC 27264 / PCC 7002 / PR-6) (Agmenellum quadruplicatum).